We begin with the raw amino-acid sequence, 551 residues long: Cleavage and polyadenylation specificity factor subunit 6 (551 aa).

In terms of domain architecture, RRM spans 81-161 (IALYIGNLTW…QNPVVTPCNK (81 aa)). At T157 the chain carries Phosphothreonine. Residues 169 to 180 (MQSRKTTQSGQM) show a composition bias toward polar residues. 2 disordered regions span residues 169 to 410 (MQSR…TPLS) and 477 to 551 (LHGI…YRHR). 3 stretches are compositionally biased toward pro residues: residues 237–265 (TRPP…PLAG), 285–366 (GQPP…PPPA), and 377–388 (GPPPTDPYGRPP). Basic and acidic residues-rich tracts occupy residues 389–404 (PYDR…EMDA) and 489–503 (SRRE…SRSR). Phosphoserine is present on residues S494, S500, S511, S513, and S525. Residues 504 to 514 (EKSRRHKSRSR) show a composition bias toward basic residues. Basic and acidic residues predominate over residues 515–551 (DRHDDYYRERSRERERHRDRDRDRDRERDREREYRHR).

The protein belongs to the RRM CPSF6/7 family. As to quaternary structure, component of the cleavage factor Im (CFIm) complex.

It localises to the nucleus. It is found in the nucleoplasm. The protein localises to the nucleus speckle. The protein resides in the cytoplasm. Its function is as follows. Component of the cleavage factor Im (CFIm) complex that functions as an activator of the pre-mRNA 3'-end cleavage and polyadenylation processing required for the maturation of pre-mRNA into functional mRNAs. CFIm contributes to the recruitment of multiprotein complexes on specific sequences on the pre-mRNA 3'-end, so called cleavage and polyadenylation signals (pA signals). Most pre-mRNAs contain multiple pA signals, resulting in alternative cleavage and polyadenylation (APA) producing mRNAs with variable 3'-end formation. The CFIm complex acts as a key regulator of cleavage and polyadenylation site choice during APA through its binding to 5'-UGUA-3' elements localized in the 3'-untranslated region (UTR) for a huge number of pre-mRNAs. Plays a role in mRNA export. The chain is Cleavage and polyadenylation specificity factor subunit 6 from Gallus gallus (Chicken).